We begin with the raw amino-acid sequence, 161 residues long: Cyclic pyranopterin monophosphate synthase (161 aa).

Residues 75-77 (LCH) and 113-114 (ME) each bind substrate. Residue aspartate 128 is part of the active site.

Belongs to the MoaC family. Homohexamer; trimer of dimers.

The enzyme catalyses (8S)-3',8-cyclo-7,8-dihydroguanosine 5'-triphosphate = cyclic pyranopterin phosphate + diphosphate. The protein operates within cofactor biosynthesis; molybdopterin biosynthesis. In terms of biological role, catalyzes the conversion of (8S)-3',8-cyclo-7,8-dihydroguanosine 5'-triphosphate to cyclic pyranopterin monophosphate (cPMP). The sequence is that of Cyclic pyranopterin monophosphate synthase from Edwardsiella ictaluri (strain 93-146).